The sequence spans 875 residues: Valine--tRNA ligase (875 aa).

The 'HIGH' region motif lies at 41–51; that stretch reads PNVTGSLHMGH. The 'KMSKS' region signature appears at 525–529; it reads KMSKS. ATP is bound at residue Lys-528. Residues 810–875 adopt a coiled-coil conformation; the sequence is VDLELIKKNL…ERISITIKGL (66 aa).

The protein belongs to the class-I aminoacyl-tRNA synthetase family. ValS type 1 subfamily. Monomer.

It is found in the cytoplasm. It carries out the reaction tRNA(Val) + L-valine + ATP = L-valyl-tRNA(Val) + AMP + diphosphate. Functionally, catalyzes the attachment of valine to tRNA(Val). As ValRS can inadvertently accommodate and process structurally similar amino acids such as threonine, to avoid such errors, it has a 'posttransfer' editing activity that hydrolyzes mischarged Thr-tRNA(Val) in a tRNA-dependent manner. The sequence is that of Valine--tRNA ligase from Pelagibacter ubique (strain HTCC1062).